Consider the following 239-residue polypeptide: UPF0173 metal-dependent hydrolase Dvul_0081 (239 aa).

The protein belongs to the UPF0173 family.

This chain is UPF0173 metal-dependent hydrolase Dvul_0081, found in Nitratidesulfovibrio vulgaris (strain DP4) (Desulfovibrio vulgaris).